Consider the following 1060-residue polypeptide: MASEFGILMTNEKFDPSLEKTICDVIVTKKGRVKHKEVDGVCGYEWDETNHRFGLCEVEHDMSISEFMYNEIRCEGAYPIFPRYIIDTLKYEKFIDRNDHQIRVDRDDNEMRKILIQPYAGEMYFSPECYPSVFLRREARSQKLDRIRNYIGKRVEFYEEESKRKAILDQNKMSKVEQWRDAVNERIVSIEPKRGECYDHGTDIIYQFIKKLRFGMMYPHYYVLHSDYCIVPNKGGTSIGSWHIRKRTEGDAKASAMYSGKGPLNDLRVKIERDDLSRETIIQIIEYGKKFNSSAGDKQGNISIEKLVEYCDFLTTFVHAKKKEEGEDDTARQEIRKAWVKGMPYMDFSKPMKITRGFNRNMLFFAALDSFRKRNGVDVDPNKGKWKEHIKEVTEKLKKAQTENGGQPCQVSIDGVNVLTNVDYGTVNHWIDWVTDIIMVVQTKRLVKEYAFKKLKSENLLAGMNSLVGVLRCYMYCLALAIYDFYEGTIDGFKKGSNASAIIETVAQMFPDFRRELVEKFGIDLRMKEITRELFVGKSMTSKFMEEGEYGYKFAYGWRRDGFAVMEDYGEILTEKVEDLYKGVLLGRKWEDEVDDPESYFYDDLYTNEPHRVFLSAGKDVDNNITLRSISQAETTYLSKRFVSYWYRISQVEVTKARNEVLDMNEKQKPYFEFEYDDFKPCSIGELGIHASTYIYQNLLVGRNRGEEILDSKELVWMDMSLLNFGAVRSHDRCWISSSVAIEVNLRHALIVRIFSRFDMMSERETFSTILEKVMEDVKKLRFFPTYRHYYLETLQRVFNDERRLEVDDFYMRLYDVQTREQALNTFTDFHRCVESELLLPTLKLNFLLWIVFEMENVEVNAAYKRHPLLISTAKGLRVIGVDIFNSQLSISMSGWIPYVERMCAESKVQTKLTADELKLKRWFISYYTTLKLDRRAEPRMSFKFEGLSTWIGSNCGGVRDYVIQMLPTRKPKPGALMVVYARDSRIEWIEAELSQWLQMEGSLGLILVHDSGIINKSVLRARTLKIYNRGSMDTLILISSGVYTFGNKFLLSKLLAKTE.

Belongs to the orbivirus VP2 family.

It is found in the virion. Its function is as follows. The VP2 protein is one of the two proteins (with VP5) which constitute the virus particle outer capsid. It is the major target of the host immunogenic response. The protein is Outer capsid protein VP2 (Segment-2) of Camelus dromedarius (Dromedary).